The sequence spans 820 residues: Leucine--tRNA ligase (820 aa).

The 'HIGH' region motif lies at 42–52; the sequence is PYPSGDLHMGH. The short motif at 576 to 580 is the 'KMSKS' region element; that stretch reads KMSKS. Lys-579 lines the ATP pocket.

This sequence belongs to the class-I aminoacyl-tRNA synthetase family.

The protein resides in the cytoplasm. The catalysed reaction is tRNA(Leu) + L-leucine + ATP = L-leucyl-tRNA(Leu) + AMP + diphosphate. This chain is Leucine--tRNA ligase, found in Coxiella burnetii (strain CbuK_Q154) (Coxiella burnetii (strain Q154)).